Here is a 602-residue protein sequence, read N- to C-terminus: DNA mismatch repair protein MutL (602 aa).

The interval 337 to 367 is disordered; that stretch reads KRPFPGSSTNYSGIQQDTKKQESDNPEKARG. Residues 342–352 show a composition bias toward polar residues; the sequence is GSSTNYSGIQQ. A compositionally biased stretch (basic and acidic residues) spans 353–367; sequence DTKKQESDNPEKARG.

It belongs to the DNA mismatch repair MutL/HexB family.

Its function is as follows. This protein is involved in the repair of mismatches in DNA. It is required for dam-dependent methyl-directed DNA mismatch repair. May act as a 'molecular matchmaker', a protein that promotes the formation of a stable complex between two or more DNA-binding proteins in an ATP-dependent manner without itself being part of a final effector complex. This Kosmotoga olearia (strain ATCC BAA-1733 / DSM 21960 / TBF 19.5.1) protein is DNA mismatch repair protein MutL.